A 476-amino-acid chain; its full sequence is MTSSPVPPTNSSDSSDSKVWSQRFESALNPVIAAFNASIHFDIALIEYDLTGSQAHVQMLAHSGIISQAEADAIDQGLEAIRQEYRQGQFQPGIEAEDIHFAVENRLIELIGDTGKKLHTGRSRNDQVGTDLRLYLHDQILQVQTLIRNWQQALVILASDHVQTLIPGYTHLQRAQPISLAHHLLAYFEMAERDWQRLREIDRRVNVSPLGLGALAGTPFPIDRQYTADKLGFADLYRNSLDGVSDRDFAIEFLCAASLIMVHLSRFSEEVILWASEEFGFIKLKDSCATGSSIMPQKKNPDVPELVRGKSGRVFGHLQSLLVVMKGLPLAYNKDLQEDKEAIFDGVTTIKACLEAMTILVAEGLEFQTPRLESAVGEDFSNATDVADYLSKQGVPFREAYNIVGAVVKTCLSQNKLLKDLTLEEWQQFHPQFADDIYSAISPRQVVAVRNSFGGTGFTQVQNALEQAKTLLSQSK.

Belongs to the lyase 1 family. Argininosuccinate lyase subfamily.

The protein resides in the cytoplasm. The enzyme catalyses 2-(N(omega)-L-arginino)succinate = fumarate + L-arginine. It functions in the pathway amino-acid biosynthesis; L-arginine biosynthesis; L-arginine from L-ornithine and carbamoyl phosphate: step 3/3. The polypeptide is Argininosuccinate lyase (Acaryochloris marina (strain MBIC 11017)).